An 86-amino-acid chain; its full sequence is Small ribosomal subunit protein bS16 (86 aa).

This sequence belongs to the bacterial ribosomal protein bS16 family.

The protein is Small ribosomal subunit protein bS16 of Bordetella bronchiseptica (strain ATCC BAA-588 / NCTC 13252 / RB50) (Alcaligenes bronchisepticus).